We begin with the raw amino-acid sequence, 442 residues long: U11/U12 small nuclear ribonucleoprotein 65 kDa protein (442 aa).

The 75-residue stretch at 28–102 (VTLLVRHLPD…KVLQVQRANK (75 aa)) folds into the RRM 1 domain. 3 disordered regions span residues 101–138 (NKPN…QILS), 200–242 (LALP…GRKR), and 290–317 (SKVT…DSNL). A compositionally biased stretch (basic and acidic residues) spans 102–116 (KPNDNKKSRQIEESV). The span at 117–136 (TKGNAFSTVSTNNDSKSGQI) shows a compositional bias: polar residues. Pro residues predominate over residues 200-209 (LALPTPPLPK). Residues 297–307 (YKEESENEDPA) are compositionally biased toward acidic residues. One can recognise an RRM 2 domain in the interval 352 to 434 (VVLYIKNLAK…KPMIIQFGRT (83 aa)).

Component of the U11/U12 snRNPs that are part of the U12-type spliceosome. Forms a complex with U12 snRNA. Ubiquitous.

The protein resides in the nucleus. In terms of biological role, component of minor spliceosome required for U12-type intron splicing and alternative splicing of many introns. Binds specifically to U12 snRNA, which is necessary for branch-point site recognition. Required for normal plant development. This chain is U11/U12 small nuclear ribonucleoprotein 65 kDa protein (SNRNP65), found in Arabidopsis thaliana (Mouse-ear cress).